Here is a 72-residue protein sequence, read N- to C-terminus: MVDKRNHYFLLHKIEELLELSASKYKTTMEIANYAKKTKNRNANKSNIKPVILAILEISGELKLNDINKLTN.

It belongs to the RNA polymerase subunit omega family.

Its subcellular location is the plastid. It is found in the chloroplast. The catalysed reaction is RNA(n) + a ribonucleoside 5'-triphosphate = RNA(n+1) + diphosphate. In terms of biological role, may be involved in RNA polymerase activity. This chain is Putative DNA-directed RNA polymerase subunit omega (rpoZ), found in Cyanidium caldarium (Red alga).